The following is a 233-amino-acid chain: Superoxide dismutase [Mn] 3.3, mitochondrial (233 aa).

Residues 1–29 constitute a mitochondrion transit peptide; sequence MALRTLASKNALSFALGGAARPSAESARG. Mn(2+) is bound by residues histidine 57, histidine 105, aspartate 194, and histidine 198.

Belongs to the iron/manganese superoxide dismutase family. As to quaternary structure, homotetramer. Mn(2+) is required as a cofactor. As to expression, predominantly expressed in the embryo late in embryogenesis.

The protein resides in the mitochondrion matrix. The enzyme catalyses 2 superoxide + 2 H(+) = H2O2 + O2. Destroys superoxide anion radicals which are normally produced within the cells and which are toxic to biological systems. This is Superoxide dismutase [Mn] 3.3, mitochondrial (SODA.2) from Zea mays (Maize).